A 266-amino-acid chain; its full sequence is Interleukin-33 (266 aa).

Residues methionine 1–threonine 67 form a homeodomain-like HTH domain region. The propeptide occupies methionine 1–phenylalanine 101. The interaction with RELA stretch occupies residues proline 66–leucine 108.

The protein belongs to the IL-1 family. Highly divergent. As to quaternary structure, (Microbial infection) Interacts (in reduced form) with H.polygyrus ARI; the interaction abolishes the interaction with its primary receptor IL1RL1. Forms a 1:1:1 heterotrimeric complex with its primary high-affinity receptor IL1RL1 and the coreceptor IL1RAP. Interacts with cargo receptor TMED10; the interaction mediates the translocation from the cytoplasm into the ERGIC (endoplasmic reticulum-Golgi intermediate compartment) and thereby secretion. The full-length protein can be released from cells and is able to signal via the IL1RL1/ST2 receptor. However, proteolytic processing by CELA1, CSTG/cathepsin G and ELANE/neutrophil elastase produces C-terminal peptides that are more active than the unprocessed full-length protein. May also be proteolytically processed by calpains. Proteolytic cleavage mediated by apoptotic caspases including CASP3 and CASP7 results in IL33 inactivation. In vitro proteolytic cleavage by CASP1 was reported but could not be confirmed in vivo suggesting that IL33 is probably not a direct substrate for that caspase.

The protein localises to the nucleus. It is found in the chromosome. Its subcellular location is the cytoplasm. It localises to the cytoplasmic vesicle. The protein resides in the secretory vesicle. The protein localises to the secreted. Functionally, cytokine that binds to and signals through the IL1RL1/ST2 receptor which in turn activates NF-kappa-B and MAPK signaling pathways in target cells. Involved in the maturation of Th2 cells inducing the secretion of T-helper type 2-associated cytokines. Also involved in activation of mast cells, basophils, eosinophils and natural killer cells. Acts as an enhancer of polarization of alternatively activated macrophages. Acts as a chemoattractant for Th2 cells, and may function as an 'alarmin', that amplifies immune responses during tissue injury. Induces rapid UCP2-dependent mitochondrial rewiring that attenuates the generation of reactive oxygen species and preserves the integrity of Krebs cycle required for persistent production of itaconate and subsequent GATA3-dependent differentiation of inflammation-resolving alternatively activated macrophages. In terms of biological role, in quiescent endothelia the uncleaved form is constitutively and abundantly expressed, and acts as a chromatin-associated nuclear factor with transcriptional repressor properties, it may sequester nuclear NF-kappaB/RELA, lowering expression of its targets. This form is rapidely lost upon angiogenic or pro-inflammatory activation. The polypeptide is Interleukin-33 (Mus musculus (Mouse)).